Here is a 166-residue protein sequence, read N- to C-terminus: Ubiquitin-fold modifier-conjugating enzyme 1 (166 aa).

The active-site Glycyl thioester intermediate is cysteine 116.

Belongs to the ubiquitin-conjugating enzyme family. UFC1 subfamily. In terms of assembly, interacts with UBA5 (via C-terminus). Interacts with UFL1. Interacts with UFM1.

Functionally, E2-like enzyme which specifically catalyzes the second step in ufmylation. Accepts the ubiquitin-like modifier UFM1 from the E1 enzyme UBA5 and forms an intermediate with UFM1 via a thioester linkage. Ufmylation is involved in various processes, such as ribosome recycling, response to DNA damage, interferon response or reticulophagy (also called ER-phagy). This Danio rerio (Zebrafish) protein is Ubiquitin-fold modifier-conjugating enzyme 1 (ufc1).